The chain runs to 519 residues: Carboxyl-terminal-processing peptidase 3, chloroplastic (519 aa).

The 89-residue stretch at 186–274 (YQSFRIGSDG…IKLKNVNGSG (89 aa)) folds into the PDZ domain. Catalysis depends on charge relay system residues Ser407 and Lys432.

Belongs to the peptidase S41A family.

It localises to the plastid. It is found in the chloroplast thylakoid lumen. The enzyme catalyses The enzyme shows specific recognition of a C-terminal tripeptide, Xaa-Yaa-Zaa, in which Xaa is preferably Ala or Leu, Yaa is preferably Ala or Tyr, and Zaa is preferably Ala, but then cleaves at a variable distance from the C-terminus. A typical cleavage is -Ala-Ala-|-Arg-Ala-Ala-Lys-Glu-Asn-Tyr-Ala-Leu-Ala-Ala.. Protease involved in the C-terminal processing of the chloroplastic D1 protein of photosystem II. This proteolytic processing is necessary to allow the light-driven assembly of the tetranuclear manganese cluster, which is responsible for photosynthetic water oxidation. This Arabidopsis thaliana (Mouse-ear cress) protein is Carboxyl-terminal-processing peptidase 3, chloroplastic (CTPA3).